The sequence spans 143 residues: Histone H2AX (143 aa).

The tract at residues 1–22 (MSGRGKTGGKARAKAKSRSSRA) is disordered. Ser2 is modified (N-acetylserine). Phosphoserine is present on Ser2. N6-acetyllysine occurs at positions 6 and 10. The span at 7-19 (TGGKARAKAKSRS) shows a compositional bias: basic residues. Lys10 bears the N6-lactoyllysine; alternate mark. Glycyl lysine isopeptide (Lys-Gly) (interchain with G-Cter in ubiquitin) cross-links involve residues Lys14 and Lys16. Lys37 is subject to N6-acetyllysine; by CREBBP and EP300. Lys120 participates in a covalent cross-link: Glycyl lysine isopeptide (Lys-Gly) (interchain with G-Cter in ubiquitin). Ser121 and Ser122 each carry phosphoserine. The disordered stretch occupies residues 121–143 (SSATVGPKAPAVGKKASQASQEY). Residues Lys128 and Lys135 each participate in a glycyl lysine isopeptide (Lys-Gly) (interchain with G-Cter in SUMO2) cross-link. A Phosphoserine modification is found at Ser137. A Phosphoserine; by ATM, ATR and PRKDC modification is found at Ser140. The [ST]-Q motif motif lies at 140–141 (SQ). Position 143 is a phosphotyrosine; by WSTF (Tyr143).

Belongs to the histone H2A family. As to quaternary structure, the nucleosome is a histone octamer containing two molecules each of H2A, H2B, H3 and H4 assembled in one H3-H4 heterotetramer and two H2A-H2B heterodimers. The octamer wraps approximately 147 bp of DNA. Interacts with numerous proteins required for DNA damage signaling and repair when phosphorylated on Ser-140. These include MDC1, BRCA1 and the MRN complex, composed of MRE11, RAD50, and NBN. Interaction with the MRN complex is mediated at least in part by NBN. Also interacts with DHX9/NDHII when phosphorylated on Ser-140 and MCPH1 when phosphorylated at Ser-140 or Tyr-143. Interacts with ARRB2; the interaction is detected in the nucleus upon OR1D2 stimulation. Interacts with WRAP53/TCAB1. Interacts with TP53BP1. Interacts with HDGFL2. Post-translationally, phosphorylated on Ser-140 (to form gamma-H2AX or H2AX139ph) in response to DNA double strand breaks (DSBs) generated by exogenous genotoxic agents, by stalled replication forks, by meiotic recombination events and during immunoglobulin class switching in lymphocytes. Phosphorylation can extend up to several thousand nucleosomes from the actual site of the DSB and may mark the surrounding chromatin for recruitment of proteins required for DNA damage signaling and repair. Widespread phosphorylation may also serve to amplify the damage signal or aid repair of persistent lesions. Phosphorylation of Ser-140 (H2AX139ph) in response to ionizing radiation is mediated by both ATM and PRKDC while defects in DNA replication induce Ser-140 phosphorylation (H2AX139ph) subsequent to activation of ATR and PRKDC. Dephosphorylation of Ser-140 by PP2A is required for DNA DSB repair. In meiosis, Ser-140 phosphorylation (H2AX139ph) first occurs at synaptonemal complexes during leptotene and is an ATM-dependent response to the formation of programmed DSBs by SPO11. Ser-140 phosphorylation (H2AX139ph) subsequently occurs at unsynapsed regions of both autosomes and the XY bivalent during zygotene and is ATR- and BRCA1-dependent. Ser-140 phosphorylation (H2AX139ph) may also be required for transcriptional repression of unsynapsed chromatin and meiotic sex chromosome inactivation (MSCI), whereby the X and Y chromosomes condense in pachytene to form the heterochromatic XY-body. During immunoglobulin class switch recombination in lymphocytes, Ser-140 phosphorylation (H2AX139ph) at sites of DNA-recombination requires the activation-induced cytidine deaminase AICDA. Phosphorylation at Tyr-143 (H2AXY142ph) by BAZ1B/WSTF determines the relative recruitment of either DNA repair or pro-apoptotic factors. Phosphorylation at Tyr-143 (H2AXY142ph) favors the recruitment of APBB1/FE65 and pro-apoptosis factors such as MAPK8/JNK1, triggering apoptosis. In contrast, dephosphorylation of Tyr-143 by EYA proteins (EYA1, EYA2, EYA3 or EYA4) favors the recruitment of MDC1-containing DNA repair complexes to the tail of phosphorylated Ser-140 (H2AX139ph). Phosphorylated by VRK1. In terms of processing, monoubiquitination of Lys-120 (H2AXK119ub) by RING1 and RNF2/RING2 complex gives a specific tag for epigenetic transcriptional repression. Following DNA double-strand breaks (DSBs), it is ubiquitinated through 'Lys-63' linkage of ubiquitin moieties by the E2 ligase UBE2N and the E3 ligases RNF8 and RNF168, leading to the recruitment of repair proteins to sites of DNA damage. Ubiquitination at Lys-14 and Lys-16 (H2AK13Ub and H2AK15Ub, respectively) in response to DNA damage is initiated by RNF168 that mediates monoubiquitination at these 2 sites, and 'Lys-63'-linked ubiquitin are then conjugated to monoubiquitin; RNF8 is able to extend 'Lys-63'-linked ubiquitin chains in vitro. H2AK119Ub and ionizing radiation-induced 'Lys-63'-linked ubiquitination (H2AK13Ub and H2AK15Ub) are distinct events. Acetylation at Lys-6 (H2AXK5ac) by KAT5 component of the NuA4 histone acetyltransferase complex promotes NBN/NBS1 assembly at the sites of DNA damage. Acetylation at Lys-37 increases in S and G2 phases. This modification has been proposed to be important for DNA double-strand break repair. As to expression, most abundant in testis, thymus and spleen.

It is found in the nucleus. It localises to the chromosome. Its function is as follows. Variant histone H2A which replaces conventional H2A in a subset of nucleosomes. Nucleosomes wrap and compact DNA into chromatin, limiting DNA accessibility to the cellular machineries which require DNA as a template. Histones thereby play a central role in transcription regulation, DNA repair, DNA replication and chromosomal stability. DNA accessibility is regulated via a complex set of post-translational modifications of histones, also called histone code, and nucleosome remodeling. Required for checkpoint-mediated arrest of cell cycle progression in response to low doses of ionizing radiation and for efficient repair of DNA double strand breaks (DSBs) specifically when modified by C-terminal phosphorylation. The protein is Histone H2AX of Mus musculus (Mouse).